The primary structure comprises 465 residues: Ribulose bisphosphate carboxylase large chain (465 aa).

At Lys4 the chain carries N6,N6,N6-trimethyllysine. Substrate is bound by residues Asn113 and Thr163. Lys165 functions as the Proton acceptor in the catalytic mechanism. Lys167 is a binding site for substrate. Mg(2+)-binding residues include Lys191, Asp193, and Glu194. An N6-carboxylysine modification is found at Lys191. His284 (proton acceptor) is an active-site residue. Residues Arg285, His317, and Ser369 each contribute to the substrate site.

Belongs to the RuBisCO large chain family. Type I subfamily. Heterohexadecamer of 8 large chains and 8 small chains; disulfide-linked. The disulfide link is formed within the large subunit homodimers. The cofactor is Mg(2+). Post-translationally, the disulfide bond which can form in the large chain dimeric partners within the hexadecamer appears to be associated with oxidative stress and protein turnover.

Its subcellular location is the plastid. The protein resides in the chloroplast. The enzyme catalyses 2 (2R)-3-phosphoglycerate + 2 H(+) = D-ribulose 1,5-bisphosphate + CO2 + H2O. It carries out the reaction D-ribulose 1,5-bisphosphate + O2 = 2-phosphoglycolate + (2R)-3-phosphoglycerate + 2 H(+). Its function is as follows. RuBisCO catalyzes two reactions: the carboxylation of D-ribulose 1,5-bisphosphate, the primary event in carbon dioxide fixation, as well as the oxidative fragmentation of the pentose substrate in the photorespiration process. Both reactions occur simultaneously and in competition at the same active site. The protein is Ribulose bisphosphate carboxylase large chain of Idesia polycarpa (Iigiri tree).